We begin with the raw amino-acid sequence, 549 residues long: Dihydroxy-acid dehydratase (549 aa).

Asp-78 lines the Mg(2+) pocket. A [2Fe-2S] cluster-binding site is contributed by Cys-119. Mg(2+) contacts are provided by Asp-120 and Lys-121. Lys-121 carries the N6-carboxylysine modification. Residue Cys-191 participates in [2Fe-2S] cluster binding. Residue Glu-441 participates in Mg(2+) binding. Catalysis depends on Ser-466, which acts as the Proton acceptor.

It belongs to the IlvD/Edd family. Homodimer. The cofactor is [2Fe-2S] cluster. It depends on Mg(2+) as a cofactor.

It catalyses the reaction (2R)-2,3-dihydroxy-3-methylbutanoate = 3-methyl-2-oxobutanoate + H2O. It carries out the reaction (2R,3R)-2,3-dihydroxy-3-methylpentanoate = (S)-3-methyl-2-oxopentanoate + H2O. It functions in the pathway amino-acid biosynthesis; L-isoleucine biosynthesis; L-isoleucine from 2-oxobutanoate: step 3/4. Its pathway is amino-acid biosynthesis; L-valine biosynthesis; L-valine from pyruvate: step 3/4. Functionally, functions in the biosynthesis of branched-chain amino acids. Catalyzes the dehydration of (2R,3R)-2,3-dihydroxy-3-methylpentanoate (2,3-dihydroxy-3-methylvalerate) into 2-oxo-3-methylpentanoate (2-oxo-3-methylvalerate) and of (2R)-2,3-dihydroxy-3-methylbutanoate (2,3-dihydroxyisovalerate) into 2-oxo-3-methylbutanoate (2-oxoisovalerate), the penultimate precursor to L-isoleucine and L-valine, respectively. The chain is Dihydroxy-acid dehydratase from Methanobrevibacter smithii (strain ATCC 35061 / DSM 861 / OCM 144 / PS).